We begin with the raw amino-acid sequence, 124 residues long: Small ribosomal subunit protein bS6 (124 aa).

It belongs to the bacterial ribosomal protein bS6 family.

Binds together with bS18 to 16S ribosomal RNA. This is Small ribosomal subunit protein bS6 from Bordetella avium (strain 197N).